The primary structure comprises 270 residues: Hydroxyethylthiazole kinase (270 aa).

Substrate is bound at residue methionine 44. ATP-binding residues include arginine 119 and threonine 165. Glycine 192 is a substrate binding site.

The protein belongs to the Thz kinase family. The cofactor is Mg(2+).

It catalyses the reaction 5-(2-hydroxyethyl)-4-methylthiazole + ATP = 4-methyl-5-(2-phosphooxyethyl)-thiazole + ADP + H(+). The protein operates within cofactor biosynthesis; thiamine diphosphate biosynthesis; 4-methyl-5-(2-phosphoethyl)-thiazole from 5-(2-hydroxyethyl)-4-methylthiazole: step 1/1. Functionally, catalyzes the phosphorylation of the hydroxyl group of 4-methyl-5-beta-hydroxyethylthiazole (THZ). In Corynebacterium efficiens (strain DSM 44549 / YS-314 / AJ 12310 / JCM 11189 / NBRC 100395), this protein is Hydroxyethylthiazole kinase.